The primary structure comprises 78 residues: DNA-directed RNA polymerase subunit omega (78 aa).

The protein belongs to the RNA polymerase subunit omega family. The RNAP catalytic core consists of 2 alpha, 1 beta, 1 beta' and 1 omega subunit. When a sigma factor is associated with the core the holoenzyme is formed, which can initiate transcription.

It catalyses the reaction RNA(n) + a ribonucleoside 5'-triphosphate = RNA(n+1) + diphosphate. Promotes RNA polymerase assembly. Latches the N- and C-terminal regions of the beta' subunit thereby facilitating its interaction with the beta and alpha subunits. In Desulfovibrio desulfuricans (strain ATCC 27774 / DSM 6949 / MB), this protein is DNA-directed RNA polymerase subunit omega.